A 267-amino-acid polypeptide reads, in one-letter code: Translation initiation factor 2 subunit alpha (267 aa).

Residues 10–81 form the S1 motif domain; sequence GELVVGKVDD…SAQQIDLSLK (72 aa).

This sequence belongs to the eIF-2-alpha family. In terms of assembly, heterotrimer composed of an alpha, a beta and a gamma chain.

EIF-2 functions in the early steps of protein synthesis by forming a ternary complex with GTP and initiator tRNA. This Halobacterium salinarum (strain ATCC 29341 / DSM 671 / R1) protein is Translation initiation factor 2 subunit alpha.